The primary structure comprises 287 residues: 2-dehydro-3-deoxyphosphooctonate aldolase (287 aa).

It belongs to the KdsA family.

Its subcellular location is the cytoplasm. The enzyme catalyses D-arabinose 5-phosphate + phosphoenolpyruvate + H2O = 3-deoxy-alpha-D-manno-2-octulosonate-8-phosphate + phosphate. It functions in the pathway carbohydrate biosynthesis; 3-deoxy-D-manno-octulosonate biosynthesis; 3-deoxy-D-manno-octulosonate from D-ribulose 5-phosphate: step 2/3. Its pathway is bacterial outer membrane biogenesis; lipopolysaccharide biosynthesis. This Rhodopseudomonas palustris (strain HaA2) protein is 2-dehydro-3-deoxyphosphooctonate aldolase.